A 275-amino-acid polypeptide reads, in one-letter code: NH(3)-dependent NAD(+) synthetase (275 aa).

Residue 46-53 (GISGGQDS) participates in ATP binding. D52 contacts Mg(2+). R141 is a binding site for deamido-NAD(+). T161 is a binding site for ATP. E166 contributes to the Mg(2+) binding site. Residues K174 and D181 each coordinate deamido-NAD(+). ATP-binding residues include K190 and T212. Residue 261-262 (HK) participates in deamido-NAD(+) binding.

The protein belongs to the NAD synthetase family. As to quaternary structure, homodimer.

The catalysed reaction is deamido-NAD(+) + NH4(+) + ATP = AMP + diphosphate + NAD(+) + H(+). It functions in the pathway cofactor biosynthesis; NAD(+) biosynthesis; NAD(+) from deamido-NAD(+) (ammonia route): step 1/1. Functionally, catalyzes the ATP-dependent amidation of deamido-NAD to form NAD. Uses ammonia as a nitrogen source. The polypeptide is NH(3)-dependent NAD(+) synthetase (Limosilactobacillus reuteri (strain DSM 20016) (Lactobacillus reuteri)).